Here is a 139-residue protein sequence, read N- to C-terminus: Large ribosomal subunit protein uL16 (139 aa).

Positions 74–94 are disordered; the sequence is LTKKPAETRQGSGKGSPESWV.

This sequence belongs to the universal ribosomal protein uL16 family. Part of the 50S ribosomal subunit.

In terms of biological role, binds 23S rRNA and is also seen to make contacts with the A and possibly P site tRNAs. The polypeptide is Large ribosomal subunit protein uL16 (Saccharopolyspora erythraea (strain ATCC 11635 / DSM 40517 / JCM 4748 / NBRC 13426 / NCIMB 8594 / NRRL 2338)).